We begin with the raw amino-acid sequence, 407 residues long: Chorismate synthase (407 aa).

Positions 40 and 46 each coordinate NADP(+). FMN contacts are provided by residues 138 to 140 (RAS) and 259 to 260 (QA). The segment covering 275–284 (RRGSRAHDEM) has biased composition (basic and acidic residues). The interval 275 to 308 (RRGSRAHDEMYPGTDGVVRSTNRAGGLEGGMTNG) is disordered. FMN-binding positions include Gly303, 318–322 (KPIST), and Arg344.

This sequence belongs to the chorismate synthase family. Homotetramer. FMNH2 serves as cofactor.

The catalysed reaction is 5-O-(1-carboxyvinyl)-3-phosphoshikimate = chorismate + phosphate. It participates in metabolic intermediate biosynthesis; chorismate biosynthesis; chorismate from D-erythrose 4-phosphate and phosphoenolpyruvate: step 7/7. Its function is as follows. Catalyzes the anti-1,4-elimination of the C-3 phosphate and the C-6 proR hydrogen from 5-enolpyruvylshikimate-3-phosphate (EPSP) to yield chorismate, which is the branch point compound that serves as the starting substrate for the three terminal pathways of aromatic amino acid biosynthesis. This reaction introduces a second double bond into the aromatic ring system. In Mycobacterium marinum (strain ATCC BAA-535 / M), this protein is Chorismate synthase.